Reading from the N-terminus, the 107-residue chain is U1-lycotoxin-Ls1g (107 aa).

The signal sequence occupies residues 1–20 (MMKVLVVVALLVTLISYSSS). A propeptide spanning residues 21–41 (EGIDDLEADELLSLMANEQTR) is cleaved from the precursor. Cystine bridges form between cysteine 51/cysteine 68, cysteine 58/cysteine 86, and cysteine 70/cysteine 84.

Belongs to the neurotoxin 19 (CSTX) family. 04 (U1-Lctx) subfamily. As to expression, expressed by the venom gland.

The protein resides in the secreted. The sequence is that of U1-lycotoxin-Ls1g from Lycosa singoriensis (Wolf spider).